The following is a 376-amino-acid chain: 28S rRNA (uridine-N(3))-methyltransferase (376 aa).

2 disordered regions span residues 1 to 33 (MAER…EEKK) and 49 to 71 (AQEE…DRGR). Residues 15–33 (HGQRIEWRKWKQQKKEEKK) show a composition bias toward basic and acidic residues. S-adenosyl-L-homocysteine is bound by residues threonine 289, arginine 292, glycine 312, asparagine 341, and threonine 342. Arginine 292, glycine 312, asparagine 341, and threonine 342 together coordinate S-adenosyl-L-methionine.

The protein belongs to the class IV-like SAM-binding methyltransferase superfamily. As to quaternary structure, interacts with INCA1.

Its subcellular location is the cytoplasm. It localises to the cytoskeleton. It is found in the spindle. The protein resides in the chromosome. The protein localises to the centromere. Its subcellular location is the kinetochore. It localises to the microtubule organizing center. It is found in the centrosome. It catalyses the reaction uridine in 28S rRNA + S-adenosyl-L-methionine = N(3)-methyluridine in 28S rRNA + S-adenosyl-L-homocysteine + H(+). S-adenosyl-L-methionine-dependent methyltransferase that specifically methylates the N3 position of a uridine in 28S rRNA. Required for association of the centrosomes with the poles of the bipolar mitotic spindle during metaphase. Also involved in chromosome alignment. May promote centrosome maturation probably by recruiting A-kinase anchor protein AKAP9 to centrosomes in early mitosis. Binds specifically to miRNA MIR145 hairpin, regulates MIR145 expression at a postranscriptional level. The polypeptide is 28S rRNA (uridine-N(3))-methyltransferase (Homo sapiens (Human)).